A 139-amino-acid polypeptide reads, in one-letter code: ATP synthase epsilon chain (139 aa).

It belongs to the ATPase epsilon chain family. In terms of assembly, F-type ATPases have 2 components, CF(1) - the catalytic core - and CF(0) - the membrane proton channel. CF(1) has five subunits: alpha(3), beta(3), gamma(1), delta(1), epsilon(1). CF(0) has three main subunits: a, b and c.

The protein localises to the cell inner membrane. Produces ATP from ADP in the presence of a proton gradient across the membrane. The polypeptide is ATP synthase epsilon chain (Pseudomonas putida (strain GB-1)).